Reading from the N-terminus, the 69-residue chain is DNA-directed RNA polymerase subunit omega (69 aa).

It belongs to the RNA polymerase subunit omega family. As to quaternary structure, the RNAP catalytic core consists of 2 alpha, 1 beta, 1 beta' and 1 omega subunit. When a sigma factor is associated with the core the holoenzyme is formed, which can initiate transcription.

It carries out the reaction RNA(n) + a ribonucleoside 5'-triphosphate = RNA(n+1) + diphosphate. In terms of biological role, promotes RNA polymerase assembly. Latches the N- and C-terminal regions of the beta' subunit thereby facilitating its interaction with the beta and alpha subunits. In Hahella chejuensis (strain KCTC 2396), this protein is DNA-directed RNA polymerase subunit omega.